The sequence spans 413 residues: uncharacterized protein (413 aa).

The chain crosses the membrane as a helical span at residues Ile25 to Thr47.

It localises to the host membrane. This is an uncharacterized protein from Acidianus sp. F28 (AFV-2).